A 184-amino-acid chain; its full sequence is Interferon alpha-2 (184 aa).

An N-terminal signal peptide occupies residues 1–23; sequence MALPFSLLMALVVLSCHSSCSLG. Intrachain disulfides connect cysteine 24/cysteine 122 and cysteine 52/cysteine 162.

Belongs to the alpha/beta interferon family. Interacts with IFNAR2.

The protein resides in the secreted. Its function is as follows. Produced by macrophages, IFN-alpha have antiviral activities. The protein is Interferon alpha-2 of Equus caballus (Horse).